Here is a 308-residue protein sequence, read N- to C-terminus: Glutaminase (308 aa).

The substrate site is built by Ser-66, Asn-117, Glu-161, Asn-168, Tyr-192, Tyr-244, and Val-262.

The protein belongs to the glutaminase family. In terms of assembly, homotetramer.

The catalysed reaction is L-glutamine + H2O = L-glutamate + NH4(+). In Salmonella agona (strain SL483), this protein is Glutaminase.